A 671-amino-acid chain; its full sequence is Leucine aminopeptidase 2 (671 aa).

Residues glutamine 184–glutamate 186 and proline 311–glutamate 316 contribute to the substrate site. Zn(2+) is bound at residue histidine 340. Glutamate 341 (proton acceptor) is an active-site residue. 2 residues coordinate Zn(2+): histidine 344 and glutamate 363. Tyrosine 429 (proton donor) is an active-site residue.

It belongs to the peptidase M1 family. Zn(2+) is required as a cofactor.

It is found in the cytoplasm. It localises to the nucleus. The enzyme catalyses an epoxide + H2O = an ethanediol. Inhibited by 3-(4-benzyloxyphenyl)-2-(R)-amino-1-propanethiol (thioamine) and N-hydroxy-N-(2-(S)-amino-3-(4-benzyloxyphenyl)propyl)-5-carboxypen-tanamide (hydroxamic acid). The aminopeptidase activity is stimulated by LTA(4). In terms of biological role, aminopeptidase that preferentially cleaves di- and tripeptides. Also has low epoxide hydrolase activity (in vitro). Can hydrolyze the epoxide leukotriene LTA(4) but it forms preferentially 5,6-dihydroxy-7,9,11,14-eicosatetraenoic acid rather than the cytokine leukotriene B(4) as the product compared to the homologous mammalian enzyme (in vitro). The protein is Leucine aminopeptidase 2 of Saccharomyces cerevisiae (strain YJM789) (Baker's yeast).